Here is a 329-residue protein sequence, read N- to C-terminus: Ketol-acid reductoisomerase (NADP(+)) (329 aa).

The KARI N-terminal Rossmann domain maps to 1–181 (MKVYYENDAD…GATRSGVLQT (181 aa)). NADP(+)-binding positions include 24 to 27 (YGSQ), R47, and 82 to 85 (DQVQ). H107 is a catalytic residue. Position 133 (G133) interacts with NADP(+). The KARI C-terminal knotted domain occupies 182-327 (TFREETETDL…GELRKMMSWL (146 aa)). Positions 190, 194, 226, and 230 each coordinate Mg(2+). Residue S251 participates in substrate binding.

The protein belongs to the ketol-acid reductoisomerase family. The cofactor is Mg(2+).

It catalyses the reaction (2R)-2,3-dihydroxy-3-methylbutanoate + NADP(+) = (2S)-2-acetolactate + NADPH + H(+). It carries out the reaction (2R,3R)-2,3-dihydroxy-3-methylpentanoate + NADP(+) = (S)-2-ethyl-2-hydroxy-3-oxobutanoate + NADPH + H(+). Its pathway is amino-acid biosynthesis; L-isoleucine biosynthesis; L-isoleucine from 2-oxobutanoate: step 2/4. The protein operates within amino-acid biosynthesis; L-valine biosynthesis; L-valine from pyruvate: step 2/4. In terms of biological role, involved in the biosynthesis of branched-chain amino acids (BCAA). Catalyzes an alkyl-migration followed by a ketol-acid reduction of (S)-2-acetolactate (S2AL) to yield (R)-2,3-dihydroxy-isovalerate. In the isomerase reaction, S2AL is rearranged via a Mg-dependent methyl migration to produce 3-hydroxy-3-methyl-2-ketobutyrate (HMKB). In the reductase reaction, this 2-ketoacid undergoes a metal-dependent reduction by NADPH to yield (R)-2,3-dihydroxy-isovalerate. This Maridesulfovibrio salexigens (strain ATCC 14822 / DSM 2638 / NCIMB 8403 / VKM B-1763) (Desulfovibrio salexigens) protein is Ketol-acid reductoisomerase (NADP(+)).